The primary structure comprises 205 residues: Large ribosomal subunit protein bL25A (205 aa).

It belongs to the bacterial ribosomal protein bL25 family. CTC subfamily. Part of the 50S ribosomal subunit; part of the 5S rRNA/L5/L18/L25 subcomplex. Contacts the 5S rRNA. Binds to the 5S rRNA independently of L5 and L18.

In terms of biological role, this is one of the proteins that binds to the 5S RNA in the ribosome where it forms part of the central protuberance. The protein is Large ribosomal subunit protein bL25A of Symbiobacterium thermophilum (strain DSM 24528 / JCM 14929 / IAM 14863 / T).